Here is a 327-residue protein sequence, read N- to C-terminus: Phenylalanine--tRNA ligase alpha subunit (327 aa).

E252 provides a ligand contact to Mg(2+).

It belongs to the class-II aminoacyl-tRNA synthetase family. Phe-tRNA synthetase alpha subunit type 1 subfamily. In terms of assembly, tetramer of two alpha and two beta subunits. Mg(2+) is required as a cofactor.

It is found in the cytoplasm. It carries out the reaction tRNA(Phe) + L-phenylalanine + ATP = L-phenylalanyl-tRNA(Phe) + AMP + diphosphate + H(+). In Shigella dysenteriae serotype 1 (strain Sd197), this protein is Phenylalanine--tRNA ligase alpha subunit.